A 1205-amino-acid polypeptide reads, in one-letter code: Centrosome and spindle pole associated protein 1 (1205 aa).

Coiled coils occupy residues 12–34 (QKAK…EMKG) and 87–108 (KLKE…TQAK). Positions 16–37 (LAKDKAELESDPPYMEMKGKAS) are disordered. Over residues 158–173 (STEKVRQVEKNIEPKS) the composition is skewed to basic and acidic residues. 3 disordered regions span residues 158-187 (STEK…KSDL), 222-277 (SRRP…PGVS), and 380-467 (QQKK…GSTL). Polar residues predominate over residues 176–187 (NKNPISQGKSDL). Composition is skewed to basic and acidic residues over residues 222–233 (SRRPLKQTKEEV) and 257–275 (ANGE…RDPG). Residues 357-391 (EDRELTKRRKEKYRQELLEQIAEQQKKKRREKDLA) are a coiled coil. Composition is skewed to basic and acidic residues over residues 401–410 (DPEKSPDRLK) and 417–428 (RHFEEMPPERPR). Serine 405 is modified (phosphoserine). Residues 433–447 (TPPPPFSAPSSPSVP) are compositionally biased toward pro residues. The stretch at 574 to 618 (STQSLQSYQEALQEQIREREARRKKERLEKEEYEAKLEAEMRIYN) forms a coiled coil. A disordered region spans residues 677–704 (AENLEDSANKNSGPLQTQSSPFARGNTF). The segment covering 685-697 (NKNSGPLQTQSSP) has biased composition (polar residues). A coiled-coil region spans residues 724–813 (RFQIEEKRQR…EKHNLQLQHY (90 aa)). Phosphoserine occurs at positions 850 and 869. A disordered region spans residues 862–881 (SSMSRAQSPPVPARKNQLRA). Residues 874-911 (ARKNQLRAEEEKKNVIMELSEMRKQLRSEERRLQGRLL) are a coiled coil. Serine 915 bears the Phosphoserine mark. A coiled-coil region spans residues 993-1014 (QQQALLREQQKRLNRIKMRRDA). Disordered stretches follow at residues 1086 to 1105 (GLDF…SLKS), 1124 to 1169 (RLTE…RPGT), and 1182 to 1205 (NEEQ…AAHA). The segment covering 1124–1134 (RLTEQQKKPTN) has biased composition (basic and acidic residues). Residues 1135–1145 (TDDEGSLVDPD) are compositionally biased toward acidic residues. Over residues 1146–1156 (DIMRHLSDDGR) the composition is skewed to basic and acidic residues.

In terms of assembly, interacts with PLEKHG6. Interacts with ARMC9, TOGARAM1, CCDC66, CEP104 and CEP290. Phosphorylated. Phosphorylation increases in colcemide-treated cells.

It is found in the cytoplasm. Its subcellular location is the cytoskeleton. It localises to the microtubule organizing center. The protein localises to the centrosome. The protein resides in the spindle. It is found in the spindle pole. Its subcellular location is the cell projection. It localises to the cilium. May play a role in cell-cycle-dependent microtubule organization. In Mus musculus (Mouse), this protein is Centrosome and spindle pole associated protein 1 (Cspp1).